The sequence spans 202 residues: Small ribosomal subunit protein uS4c (202 aa).

In terms of domain architecture, S4 RNA-binding spans 90 to 153; the sequence is MRLDNIIFRL…KSQAIISKNL (64 aa).

This sequence belongs to the universal ribosomal protein uS4 family. In terms of assembly, part of the 30S ribosomal subunit. Contacts protein S5. The interaction surface between S4 and S5 is involved in control of translational fidelity.

It is found in the plastid. It localises to the chloroplast. Functionally, one of the primary rRNA binding proteins, it binds directly to 16S rRNA where it nucleates assembly of the body of the 30S subunit. Its function is as follows. With S5 and S12 plays an important role in translational accuracy. The protein is Small ribosomal subunit protein uS4c (rps4) of Rosulabryum capillare (Capillary thread-moss).